The primary structure comprises 246 residues: Ubiquinone biosynthesis O-methyltransferase (246 aa).

4 residues coordinate S-adenosyl-L-methionine: Arg44, Gly63, Asp84, and Met128.

The protein belongs to the methyltransferase superfamily. UbiG/COQ3 family.

The enzyme catalyses a 3-demethylubiquinol + S-adenosyl-L-methionine = a ubiquinol + S-adenosyl-L-homocysteine + H(+). It catalyses the reaction a 3-(all-trans-polyprenyl)benzene-1,2-diol + S-adenosyl-L-methionine = a 2-methoxy-6-(all-trans-polyprenyl)phenol + S-adenosyl-L-homocysteine + H(+). It functions in the pathway cofactor biosynthesis; ubiquinone biosynthesis. In terms of biological role, O-methyltransferase that catalyzes the 2 O-methylation steps in the ubiquinone biosynthetic pathway. In Xylella fastidiosa (strain Temecula1 / ATCC 700964), this protein is Ubiquinone biosynthesis O-methyltransferase.